The following is a 71-amino-acid chain: Virion membrane protein A13 homolog (71 aa).

A helical transmembrane segment spans residues 1–21 (MGIIDTFVITAVTVIIFCLLI). Over 22–70 (YAAYKRYKCIPSPDDRDKVLKSTLNDDTLFNQTLTPDQVKALHRLVTSS) the chain is Virion surface.

It belongs to the chordopoxvirinae A13 family.

The protein resides in the virion membrane. Its function is as follows. Essential for the encapsidation of DNA into immature virions (IV) and the subsequent maturation of IV into mature virions (MV). The sequence is that of Virion membrane protein A13 homolog from Vertebrata (FPV).